A 256-amino-acid polypeptide reads, in one-letter code: Fat body protein 2 (256 aa).

Valine 10–methionine 34 serves as a coordination point for NAD(+). Serine 138 contacts substrate. Tyrosine 151 serves as the catalytic Proton acceptor.

Belongs to the short-chain dehydrogenases/reductases (SDR) family.

In Drosophila melanogaster (Fruit fly), this protein is Fat body protein 2 (Fbp2).